A 213-amino-acid polypeptide reads, in one-letter code: dITP/XTP pyrophosphatase (213 aa).

17–22 (SNNAGK) contacts substrate. Aspartate 78 functions as the Proton acceptor in the catalytic mechanism. Aspartate 78 lines the Mg(2+) pocket. Substrate-binding positions include serine 79, 164 to 167 (FGYD), lysine 187, and 192 to 193 (HR).

The protein belongs to the HAM1 NTPase family. Homodimer. Mg(2+) serves as cofactor.

The catalysed reaction is XTP + H2O = XMP + diphosphate + H(+). It catalyses the reaction dITP + H2O = dIMP + diphosphate + H(+). It carries out the reaction ITP + H2O = IMP + diphosphate + H(+). Functionally, pyrophosphatase that catalyzes the hydrolysis of nucleoside triphosphates to their monophosphate derivatives, with a high preference for the non-canonical purine nucleotides XTP (xanthosine triphosphate), dITP (deoxyinosine triphosphate) and ITP. Seems to function as a house-cleaning enzyme that removes non-canonical purine nucleotides from the nucleotide pool, thus preventing their incorporation into DNA/RNA and avoiding chromosomal lesions. In Bordetella parapertussis (strain 12822 / ATCC BAA-587 / NCTC 13253), this protein is dITP/XTP pyrophosphatase.